Consider the following 424-residue polypeptide: Imidazolonepropionase (424 aa).

The Fe(3+) site is built by His84 and His86. Zn(2+) contacts are provided by His84 and His86. 4-imidazolone-5-propanoate is bound by residues Arg93, Tyr156, and His189. Tyr156 contacts N-formimidoyl-L-glutamate. His254 provides a ligand contact to Fe(3+). His254 contacts Zn(2+). Residue Glu257 participates in 4-imidazolone-5-propanoate binding. Residue Asp328 participates in Fe(3+) binding. A Zn(2+)-binding site is contributed by Asp328. N-formimidoyl-L-glutamate-binding residues include Asn330 and Gly332. Ser333 lines the 4-imidazolone-5-propanoate pocket.

Belongs to the metallo-dependent hydrolases superfamily. HutI family. Requires Zn(2+) as cofactor. Fe(3+) is required as a cofactor.

The protein localises to the cytoplasm. The catalysed reaction is 4-imidazolone-5-propanoate + H2O = N-formimidoyl-L-glutamate. It participates in amino-acid degradation; L-histidine degradation into L-glutamate; N-formimidoyl-L-glutamate from L-histidine: step 3/3. In terms of biological role, catalyzes the hydrolytic cleavage of the carbon-nitrogen bond in imidazolone-5-propanoate to yield N-formimidoyl-L-glutamate. It is the third step in the universal histidine degradation pathway. The chain is Imidazolonepropionase from Geobacillus thermodenitrificans (strain NG80-2).